The following is a 460-amino-acid chain: Ammonium transporter Rh type B (460 aa).

The Cytoplasmic portion of the chain corresponds to 1–10; that stretch reads MTGYSTNMRI. Residues 11–31 form a helical membrane-spanning segment; the sequence is KLPVFCLLLEFITIILFAVFV. The Extracellular segment spans residues 32-62; the sequence is RYDHESDAKQWHDEMRNHSVQNAENDFYFRY. A glycan (N-linked (GlcNAc...) asparagine) is linked at N48. A helical transmembrane segment spans residues 63–83; it reads PSFQDVHVMIFIGFGFLMTFL. Over 84 to 87 the chain is Cytoplasmic; that stretch reads KRYG. Residues 88-108 traverse the membrane as a helical segment; the sequence is FSSVAFNFLIAAFGLQWSTLI. Over 109–125 the chain is Extracellular; it reads QGFFHGFHDGKIHVGIE. The chain crosses the membrane as a helical span at residues 126–146; the sequence is SMINADFCTGAVLISFGAVLG. At 147-150 the chain is on the cytoplasmic side; it reads KTSP. A helical transmembrane segment spans residues 151–171; the sequence is VQLIVMTLIEVTLFGINEYII. Over 172–179 the chain is Extracellular; that stretch reads LNIVGAKD. The chain crosses the membrane as a helical span at residues 180 to 202; that stretch reads AGGSMTIHTFGAYFGLIVSRVLY. Residues 203–220 lie on the Cytoplasmic side of the membrane; that stretch reads RDDLEKSRQREGSVYHSD. Residues 221–241 form a helical membrane-spanning segment; that stretch reads LFAMIGTIYLWMFWPSFNSAI. The Extracellular segment spans residues 242 to 252; the sequence is TAHGDDQHRTV. The chain crosses the membrane as a helical span at residues 253-273; it reads MNTYYSLAACTLATFGFSALL. Topologically, residues 274-283 are cytoplasmic; it reads NGEGKLDMVH. Residues 284 to 304 traverse the membrane as a helical segment; the sequence is IQNAALAGGVAVGTSGEMMLT. P305 is a topological domain (extracellular). The chain crosses the membrane as a helical span at residues 306-326; that stretch reads FGAMIAGTLAGMISVLGYKYL. Over 327 to 347 the chain is Cytoplasmic; sequence TPVLDSKLKIQDTCGVHNLHG. Residues 348–368 form a helical membrane-spanning segment; sequence MPGILGALIGAIVALFATAEI. The Extracellular segment spans residues 369 to 394; that stretch reads YGAGMEDVFPLISDGSRTAKQQSLYQ. The helical transmembrane segment at 395 to 415 threads the bilayer; it reads FLALLVALGFAILGGLVVGFI. The Cytoplasmic portion of the chain corresponds to 416–460; that stretch reads LKLPIFGTPSDAECFEDAVYWEVPGGEGHQQLTVVINNEDPDTQA.

The protein belongs to the ammonium transporter (TC 2.A.49) family. Rh subfamily.

The protein localises to the basolateral cell membrane. It is found in the cytoplasmic vesicle membrane. In terms of biological role, functions as a specific ammonium transporter. The sequence is that of Ammonium transporter Rh type B (rhbg) from Xenopus tropicalis (Western clawed frog).